The primary structure comprises 204 residues: LexA repressor (204 aa).

A DNA-binding region (H-T-H motif) is located at residues 28 to 48; it reads RAEIANRLGFKSANAAEEHLK. Active-site for autocatalytic cleavage activity residues include Ser-121 and Lys-158.

This sequence belongs to the peptidase S24 family. Homodimer.

It carries out the reaction Hydrolysis of Ala-|-Gly bond in repressor LexA.. Represses a number of genes involved in the response to DNA damage (SOS response), including recA and lexA. In the presence of single-stranded DNA, RecA interacts with LexA causing an autocatalytic cleavage which disrupts the DNA-binding part of LexA, leading to derepression of the SOS regulon and eventually DNA repair. The protein is LexA repressor of Shewanella frigidimarina (strain NCIMB 400).